The following is a 126-amino-acid chain: MAIIGIGIDVINIFRFKKLIINYGIKIPKKILSKKELIEYSYTHKKEKFLAIRFSIKEAIAKAIGISIFKNNFLNNCEIFYNKKKKIQLTTLGYIKKIFKKSQVKKIFLSVTDSNKHTYAIAILEK.

2 residues coordinate Mg(2+): D9 and E58.

It belongs to the P-Pant transferase superfamily. AcpS family. The cofactor is Mg(2+).

The protein resides in the cytoplasm. It catalyses the reaction apo-[ACP] + CoA = holo-[ACP] + adenosine 3',5'-bisphosphate + H(+). Transfers the 4'-phosphopantetheine moiety from coenzyme A to a Ser of acyl-carrier-protein. The polypeptide is Holo-[acyl-carrier-protein] synthase (Buchnera aphidicola subsp. Cinara cedri (strain Cc)).